The chain runs to 725 residues: DNA replication licensing factor MCM7 (725 aa).

Residues 333-538 (IYNKLARSLA…METDLEMARH (206 aa)) enclose the MCM domain. 383 to 390 (GDPGVAKS) is an ATP binding site. Residues 515–518 (SRFD) carry the Arginine finger motif.

It belongs to the MCM family. Component of the minichromosome maintenance (MCM) complex, a heterotetramer composed of MCM2, MCM3, MCM4, MCM5, MCM6 and MCM7.

It localises to the nucleus. The enzyme catalyses ATP + H2O = ADP + phosphate + H(+). Its function is as follows. Probable component of the MCM2-7 complex (MCM complex) that may function as a DNA helicase and which is essential to undergo a single round of replication initiation and elongation per cell cycle in eukaryotic cells. This chain is DNA replication licensing factor MCM7 (MCM7), found in Oryza sativa subsp. indica (Rice).